The primary structure comprises 104 residues: Transcription elongation factor A protein-like 9 (104 aa).

The span at 1 to 27 shows a compositional bias: basic and acidic residues; that stretch reads MKSCQKMEGKPENESEPKHEEEPKPEE. The disordered stretch occupies residues 1–44; it reads MKSCQKMEGKPENESEPKHEEEPKPEEKPEEEEKLEEEAKAKGT.

It belongs to the TFS-II family. TFA subfamily.

It localises to the nucleus. May be involved in transcriptional regulation. This Homo sapiens (Human) protein is Transcription elongation factor A protein-like 9.